Here is a 711-residue protein sequence, read N- to C-terminus: Zinc finger protein 175 (711 aa).

Residues 1–11 show a composition bias toward polar residues; that stretch reads MPADVNLSQKP. The interval 1–21 is disordered; sequence MPADVNLSQKPQVLGPEKQDG. One can recognise a KRAB domain in the interval 27 to 98; that stretch reads VSFEDVTVDF…EAEVSHQRCQ (72 aa). The C2H2-type 1; atypical zinc-finger motif lies at 279-301; the sequence is DGCSECGGSFTQKSHLFAQQRIH. The C2H2-type 2; atypical zinc-finger motif lies at 307–329; it reads HECGKCGKAFMPQLKLSVYLTDH. Residues 335 to 357 form a C2H2-type 3 zinc finger; it reads CICKECGKVFIQRSELLTHQKTH. The Nuclear localization signal motif lies at 359-362; that stretch reads RKKP. 12 C2H2-type zinc fingers span residues 363-385, 391-413, 419-441, 447-469, 475-497, 503-525, 531-553, 559-581, 587-609, 615-637, 643-665, and 671-693; these read YKCHDCGKAFFQMLSLFRHQRTH, YECSECGKGFSQNSTLIIHQKIH, YACSECGKAFTQKSTLSLHQRIH, YVCIECGQAFIQKAHLIVHQRSH, YQCHNCGKSFISKSQLDIHHRIH, YECSDCGKTFTQKSHLNIHQKIH, HVCSECGKAFNQKSILSMHQRIH, YKCSECGKAFTSKSQFKEHQRIH, YVCTECGKAFNGRSNFHKHQITH, FVCYKCGKAFVQKSELITHQRTH, YECLDCGKSFSKKPQLKVHQRIH, and YVCSECGKAFNNRSNFNKHQTTH.

This sequence belongs to the krueppel C2H2-type zinc-finger protein family. Ubiquitous.

It is found in the cytoplasm. Its subcellular location is the nucleus. In terms of biological role, down-regulates the expression of several chemokine receptors. Interferes with HIV-1 replication by suppressing Tat-induced viral LTR promoter activity. The protein is Zinc finger protein 175 (ZNF175) of Homo sapiens (Human).